The following is a 213-amino-acid chain: MAAVEPENTNPQSTEEEKETGQEIVSPDQYIKHPLQNRWALWFFKNDKSKTWQANLRLISKFDTVEDFWALYNHIQLSSNLMSGCDYSLFKDGIEPMWEDEKNKRGGRWLITLNKQQRRNDLDRFWLETLMCLIGESFDEHSDDVCGAVVNVRAKGDKIAIWTTEFENKDAVTHIGRVYKERLGLPAKVVIGYQSHADTATKSGSTTKNRFVV.

A disordered region spans residues 1 to 27 (MAAVEPENTNPQSTEEEKETGQEIVSP). MRNA contacts are provided by residues 52–53 (WQ), 98–99 (WE), 153–158 (RAKGDK), and 201–203 (TKS).

The protein belongs to the eukaryotic initiation factor 4E family. As to quaternary structure, eIF4F is a multi-subunit complex, the composition of which varies with external and internal environmental conditions. It is composed of at least eif4a, eif4e and eif4g. eif4e is also known to interact with other partners. tacc3/maskin competes with eif4g for binding to eif4e.

It localises to the cytoplasm. The protein localises to the nucleus. Recognizes and binds the 7-methylguanosine (m7G)-containing mRNA cap during an early step in the initiation of protein synthesis and facilitates ribosome binding by inducing the unwinding of the mRNAs secondary structures. In addition to its role in translation initiation, also acts as a regulator of translation and stability in the cytoplasm. Maternal RNA in oocytes remain in a dormant state as tacc3/maskin outcompetes eif4g to bind eif4e, thereby preventing translation. During oocyte maturation this complex dissolves and eif4g binds eif4e to allow translation of maternal RNAs. Also promotes export of a subset of mRNAs from the nucleus to the cytoplasm. This chain is Eukaryotic translation initiation factor 4E (eif4e), found in Xenopus laevis (African clawed frog).